The sequence spans 341 residues: tRNA (cytidine(56)-2'-O)-methyltransferase (341 aa).

Residues Leu79 and 104–108 contribute to the S-adenosyl-L-methionine site; that span reads GAEKV. The region spanning 187 to 294 is the HD domain; the sequence is IIRHVETVYK…VAHADNLVSM (108 aa).

The protein belongs to the aTrm56 family. As to quaternary structure, homodimer.

It localises to the cytoplasm. The catalysed reaction is cytidine(56) in tRNA + S-adenosyl-L-methionine = 2'-O-methylcytidine(56) in tRNA + S-adenosyl-L-homocysteine + H(+). Its function is as follows. Specifically catalyzes the AdoMet-dependent 2'-O-ribose methylation of cytidine at position 56 in tRNAs. The polypeptide is tRNA (cytidine(56)-2'-O)-methyltransferase (Picrophilus torridus (strain ATCC 700027 / DSM 9790 / JCM 10055 / NBRC 100828 / KAW 2/3)).